The following is an 87-amino-acid chain: UPF0367 protein SynRCC307_0258 (87 aa).

The protein belongs to the UPF0367 family.

This is UPF0367 protein SynRCC307_0258 from Synechococcus sp. (strain RCC307).